Consider the following 465-residue polypeptide: Transcriptional protein swt1 (465 aa).

A PINc domain is found at 70–190; sequence GLFVLDTNFL…LLSDDKNLSI (121 aa).

It belongs to the SWT1 family.

Its subcellular location is the cytoplasm. The protein localises to the nucleus. In terms of biological role, involved in transcription. This is Transcriptional protein swt1 from Schizosaccharomyces pombe (strain 972 / ATCC 24843) (Fission yeast).